Consider the following 59-residue polypeptide: Large ribosomal subunit protein uL30 (59 aa).

The protein belongs to the universal ribosomal protein uL30 family. Part of the 50S ribosomal subunit.

The protein is Large ribosomal subunit protein uL30 of Aliivibrio salmonicida (strain LFI1238) (Vibrio salmonicida (strain LFI1238)).